The chain runs to 451 residues: Phosphoglucosamine mutase (451 aa).

Catalysis depends on Ser103, which acts as the Phosphoserine intermediate. Mg(2+)-binding residues include Ser103, Asp243, Asp245, and Asp247. Position 103 is a phosphoserine (Ser103).

Belongs to the phosphohexose mutase family. Requires Mg(2+) as cofactor. Activated by phosphorylation.

It carries out the reaction alpha-D-glucosamine 1-phosphate = D-glucosamine 6-phosphate. Its function is as follows. Catalyzes the conversion of glucosamine-6-phosphate to glucosamine-1-phosphate. The sequence is that of Phosphoglucosamine mutase from Lactobacillus johnsonii (strain CNCM I-12250 / La1 / NCC 533).